A 528-amino-acid chain; its full sequence is G protein-coupled receptor 161 (528 aa).

Residues M1–E30 lie on the Extracellular side of the membrane. N-linked (GlcNAc...) asparagine glycans are attached at residues N4 and N15. A helical transmembrane segment spans residues F31 to T51. Topologically, residues L52 to K64 are cytoplasmic. Residues F65–V85 form a helical membrane-spanning segment. The Extracellular segment spans residues T86 to N101. C100 and C178 are disulfide-bonded. A glycan (N-linked (GlcNAc...) asparagine) is linked at N101. The helical transmembrane segment at F102–A122 threads the bilayer. Residues V123–R143 are Cytoplasmic-facing. A helical transmembrane segment spans residues A144–F164. Over G165–A190 the chain is Extracellular. A helical transmembrane segment spans residues F191–I211. The Cytoplasmic portion of the chain corresponds to F212–L269. Residues V270 to I290 form a helical membrane-spanning segment. Over T291–E306 the chain is Extracellular. A helical transmembrane segment spans residues T307 to W327. The Cytoplasmic portion of the chain corresponds to N328 to R528.

This sequence belongs to the G-protein coupled receptor 1 family.

It localises to the cell projection. It is found in the cilium membrane. The protein localises to the cell membrane. Functionally, key negative regulator of Shh signaling, which promotes the processing of GLI3 into GLI3R during neural tube development. Recruited by TULP3 and the IFT-A complex to primary cilia and acts as a regulator of the PKA-dependent basal repression machinery in Shh signaling by increasing cAMP levels, leading to promote the PKA-dependent processing of GLI3 into GLI3R and repress the Shh signaling. In presence of SHH, it is removed from primary cilia and is internalized into recycling endosomes, preventing its activity and allowing activation of the Shh signaling. Its ligand is unknown. The polypeptide is G protein-coupled receptor 161 (GPR161) (Bos taurus (Bovine)).